The chain runs to 521 residues: Glutamate--cysteine ligase (521 aa).

Belongs to the glutamate--cysteine ligase type 1 family. Type 1 subfamily.

It carries out the reaction L-cysteine + L-glutamate + ATP = gamma-L-glutamyl-L-cysteine + ADP + phosphate + H(+). It functions in the pathway sulfur metabolism; glutathione biosynthesis; glutathione from L-cysteine and L-glutamate: step 1/2. The protein is Glutamate--cysteine ligase (gshA) of Buchnera aphidicola subsp. Baizongia pistaciae (strain Bp).